Reading from the N-terminus, the 1428-residue chain is DNA-directed RNA polymerase subunit beta' (1428 aa).

Zn(2+) is bound by residues Cys-66, Cys-68, Cys-81, and Cys-84. Residues Asp-472, Asp-474, and Asp-476 each contribute to the Mg(2+) site. Residues Cys-816, Cys-890, Cys-897, and Cys-900 each contribute to the Zn(2+) site.

Belongs to the RNA polymerase beta' chain family. In terms of assembly, the RNAP catalytic core consists of 2 alpha, 1 beta, 1 beta' and 1 omega subunit. When a sigma factor is associated with the core the holoenzyme is formed, which can initiate transcription. Requires Mg(2+) as cofactor. It depends on Zn(2+) as a cofactor.

It catalyses the reaction RNA(n) + a ribonucleoside 5'-triphosphate = RNA(n+1) + diphosphate. Its function is as follows. DNA-dependent RNA polymerase catalyzes the transcription of DNA into RNA using the four ribonucleoside triphosphates as substrates. In Phocaeicola vulgatus (strain ATCC 8482 / DSM 1447 / JCM 5826 / CCUG 4940 / NBRC 14291 / NCTC 11154) (Bacteroides vulgatus), this protein is DNA-directed RNA polymerase subunit beta'.